A 219-amino-acid chain; its full sequence is 7-methyl-GTP pyrophosphatase (219 aa).

Asp89 functions as the Proton acceptor in the catalytic mechanism.

This sequence belongs to the Maf family. YceF subfamily. It depends on a divalent metal cation as a cofactor.

The protein localises to the cytoplasm. It carries out the reaction N(7)-methyl-GTP + H2O = N(7)-methyl-GMP + diphosphate + H(+). Its function is as follows. Nucleoside triphosphate pyrophosphatase that hydrolyzes 7-methyl-GTP (m(7)GTP). May have a dual role in cell division arrest and in preventing the incorporation of modified nucleotides into cellular nucleic acids. The protein is 7-methyl-GTP pyrophosphatase of Polaromonas sp. (strain JS666 / ATCC BAA-500).